A 229-amino-acid polypeptide reads, in one-letter code: Protein GLC8 (229 aa).

Disordered regions lie at residues 1-21 (MGGI…QQDP), 35-62 (TQKN…EIIG), and 107-229 (QFQD…TKEP). Phosphoserine is present on S12. Residues 107-117 (QFQDIHIDEPK) are compositionally biased toward basic and acidic residues. T118 is subject to Phosphothreonine; by PHO85. The residue at position 158 (S158) is a Phosphoserine. Residues 164 to 173 (FEIKENKQPD) show a composition bias toward basic and acidic residues. A compositionally biased stretch (acidic residues) spans 175-184 (ETNDENDEDS). S184 bears the Phosphoserine mark. Positions 185 to 196 (PEARHKKFEEMR) are enriched in basic and acidic residues.

Phosphorylated by the cyclin-CDKs PCL6-PHO85 and PCL7-PHO85. Phosphorylation of Thr-118 inactivates GLC8.

Its function is as follows. Modulator of GLC7 type-1 protein phosphatase. The protein is Protein GLC8 (GLC8) of Saccharomyces cerevisiae (strain ATCC 204508 / S288c) (Baker's yeast).